The following is a 150-amino-acid chain: UPF0178 protein Rru_A0086 (150 aa).

Belongs to the UPF0178 family.

The protein is UPF0178 protein Rru_A0086 of Rhodospirillum rubrum (strain ATCC 11170 / ATH 1.1.1 / DSM 467 / LMG 4362 / NCIMB 8255 / S1).